Consider the following 189-residue polypeptide: UPF0301 protein RPR_01165 (189 aa).

It belongs to the UPF0301 (AlgH) family.

This Rickettsia peacockii (strain Rustic) protein is UPF0301 protein RPR_01165.